Here is a 368-residue protein sequence, read N- to C-terminus: Endophilin-A2 (368 aa).

A membrane-binding amphipathic helix region spans residues 1-21 (MSVAGLKKQFYKASQLVSEKV). A BAR domain is found at 18-249 (SEKVGGAEGT…LKRRVREASS (232 aa)). Residues 60–87 (PNPASRAKLTMLNTVSKIRGQVKNPGYP) form a required for dimerization upon membrane association region. Residues 180–250 (DEELRQALEK…KRRVREASSR (71 aa)) adopt a coiled-coil conformation. An interaction with ARC region spans residues 218–254 (LVDAQLDYHRQAVQILEELADKLKRRVREASSRPRRE). A disordered region spans residues 243–309 (RVREASSRPR…SKSMPPLDQP (67 aa)). Basic and acidic residues predominate over residues 245–261 (REASSRPRREFKPRPQE). Phosphoserine is present on S288. T298 carries the phosphothreonine modification. The region spanning 306–365 (LDQPSCKALYDFEPENDGELGFREGDLITLTNQIDENWYEGMLHGQSGFFPLSYVQVLVP) is the SH3 domain. At Y315 the chain carries Phosphotyrosine.

This sequence belongs to the endophilin family. As to quaternary structure, interacts with ARC, SYNJ1 and DNM1. Interacts with PDCD6IP. Interacts with BIN2. In terms of tissue distribution, detected in brain and testis (at protein level). Ubiquitous.

It localises to the cytoplasm. The protein resides in the early endosome membrane. The protein localises to the cell projection. Its subcellular location is the podosome. In terms of biological role, implicated in endocytosis. May recruit other proteins to membranes with high curvature. The protein is Endophilin-A2 (Sh3gl1) of Rattus norvegicus (Rat).